Consider the following 221-residue polypeptide: ATP synthase subunit a 1 (221 aa).

5 consecutive transmembrane segments (helical) span residues 20-40 (LTIV…ALIT), 78-98 (YLPF…CTVI), 108-128 (LSTT…FGIA), 174-194 (MILV…MNIL), and 196-216 (LLTG…YIAA).

Belongs to the ATPase A chain family. F-type ATPases have 2 components, CF(1) - the catalytic core - and CF(0) - the membrane proton channel. CF(1) has five subunits: alpha(3), beta(3), gamma(1), delta(1), epsilon(1). CF(0) has four main subunits: a, b, b' and c.

It is found in the cell inner membrane. Its function is as follows. Key component of the proton channel; it plays a direct role in the translocation of protons across the membrane. The polypeptide is ATP synthase subunit a 1 (Chlorobaculum tepidum (strain ATCC 49652 / DSM 12025 / NBRC 103806 / TLS) (Chlorobium tepidum)).